Here is a 290-residue protein sequence, read N- to C-terminus: MSNIIARFHKIQVQDGVKVWYREAGAAGNPTILLLHGFPTSSNMFRNLIPLLAGQFHIIAPDLPGFGFTETPENYKFSFDSLCESIGYLLDTLSIEKFAMYIFDYGSPVGFRLALKFPSRITGIVTQNGNAYEEGLDDRFWGPLKEYWKSYQSDPVFVKSLIPYLEDPANVICQYHDGVPAIESVDPAAYTLDIALIQRTGQTDIQLRLFFDYQNNIKLYPAFQKFLRDSKIPVLVAWGANDTIFSVAGAEAYRKDVDNLKVVYYDTGHFALETHVVAIAEEIISMFAEN.

The region spanning 30–274 (PTILLLHGFP…YDTGHFALET (245 aa)) is the AB hydrolase-1 domain. His-269 is a catalytic residue.

The protein belongs to the DmpD/TodF/XylF esterase family.

This is an uncharacterized protein from Saccharomyces cerevisiae (strain ATCC 204508 / S288c) (Baker's yeast).